The following is a 397-amino-acid chain: Serine protease MT3772 (397 aa).

Helical transmembrane passes span 9 to 29 (IAVLAVAFIAAISGWRAGALG), 32 to 52 (LSFGGVLLGATAGVLLAPHIV), 62 to 82 (LFAALFLILALVVVGEVAGVV), and 102 to 122 (VIGVGVQLVVVLTAAWLLAMP). Residues Cys-214 and Cys-395 are joined by a disulfide bond. The Proton acceptor role is filled by His-235. The active site involves Asp-264. Residue Ser-343 is the Charge relay system of the active site.

It belongs to the peptidase S1C family. As to quaternary structure, monomer.

It is found in the membrane. Required for M.tuberculosis resistance to oxidative stress in addition to its role in resistance to acid, which is essential for virulence. In Mycobacterium tuberculosis (strain CDC 1551 / Oshkosh), this protein is Serine protease MT3772.